A 139-amino-acid polypeptide reads, in one-letter code: uncharacterized protein (139 aa).

Residues 9-133 (QAAQIRIARP…DGWRIVFMNS (125 aa)) form the VOC domain.

This is an uncharacterized protein from Bacillus subtilis (strain 168).